We begin with the raw amino-acid sequence, 159 residues long: MEAERPQEEDGEQSLPQDDQGWPPVNATARPWRSAPPSPPPPGTRHTALGPRSGSLLSLQTELLLDLVAEAQSRRLEEQRATFHTPEAPPNLAPAPPRLLEDKEQLYSTILSHQCQRIEAQRSDPPLPPGGQELLELLLRVQGGGRMEEQRSRPPTHTC.

The disordered stretch occupies residues 1–54; that stretch reads MEAERPQEEDGEQSLPQDDQGWPPVNATARPWRSAPPSPPPPGTRHTALGPRSG. 4 positions are modified to phosphoserine: Ser-34, Ser-38, Ser-55, and Ser-58. Positions 34–43 are enriched in pro residues; it reads SAPPSPPPPG. Thr-61 is subject to Phosphothreonine. Residues 61–83 form the GoLoco 1 domain; the sequence is TELLLDLVAEAQSRRLEEQRATF. The tract at residues 77-97 is disordered; the sequence is EEQRATFHTPEAPPNLAPAPP. Residues 87-97 show a composition bias toward pro residues; sequence EAPPNLAPAPP. GoLoco domains lie at 103–125 and 131–154; these read KEQL…RSDP and GQEL…RSRP.

It is found in the cytoplasm. Functionally, interacts with subunit of G(i) alpha proteins and regulates the activation of G(i) alpha proteins. In Mus musculus (Mouse), this protein is G-protein-signaling modulator 3 (Gpsm3).